The sequence spans 232 residues: MKKLLVIDFREKIKYEDAWDLQKKLHDLRVKDTIYDTLILLEHFPVITLGKFGDEKNLLKTKEELKSMGIDFIRVDRGGDITYHGPSQLVGYFIFKVDGVKNFVLKVEKSIINVLHEYGIEAKESIEYPGVWVEDRKITAIGIAIKKRVSYHGFALNVNNDLAPFSYIIPCGLKDKKVTSILKEANFSPPMEDVKRKVCLSVVKEFGFDSFMVFNFSSCKELSNFGMLLEDL.

The BPL/LPL catalytic domain maps to 32 to 219; sequence DTIYDTLILL…SFMVFNFSSC (188 aa). Substrate-binding positions include 77-84, 140-142, and 153-155; these read RGGDITYH, AIG, and GFA. Cys171 acts as the Acyl-thioester intermediate in catalysis.

Belongs to the LipB family.

The protein resides in the cytoplasm. It catalyses the reaction octanoyl-[ACP] + L-lysyl-[protein] = N(6)-octanoyl-L-lysyl-[protein] + holo-[ACP] + H(+). It functions in the pathway protein modification; protein lipoylation via endogenous pathway; protein N(6)-(lipoyl)lysine from octanoyl-[acyl-carrier-protein]: step 1/2. Functionally, catalyzes the transfer of endogenously produced octanoic acid from octanoyl-acyl-carrier-protein onto the lipoyl domains of lipoate-dependent enzymes. Lipoyl-ACP can also act as a substrate although octanoyl-ACP is likely to be the physiological substrate. The chain is Octanoyltransferase from Dictyoglomus thermophilum (strain ATCC 35947 / DSM 3960 / H-6-12).